The chain runs to 112 residues: ATP synthase subunit c (112 aa).

Helical transmembrane passes span 36–56 (FSVL…AIGM) and 81–101 (MFIA…IALI).

The protein belongs to the ATPase C chain family. F-type ATPases have 2 components, F(1) - the catalytic core - and F(0) - the membrane proton channel. F(1) has five subunits: alpha(3), beta(3), gamma(1), delta(1), epsilon(1). F(0) has three main subunits: a(1), b(2) and c(10-14). The alpha and beta chains form an alternating ring which encloses part of the gamma chain. F(1) is attached to F(0) by a central stalk formed by the gamma and epsilon chains, while a peripheral stalk is formed by the delta and b chains.

The protein resides in the cell inner membrane. In terms of biological role, f(1)F(0) ATP synthase produces ATP from ADP in the presence of a proton or sodium gradient. F-type ATPases consist of two structural domains, F(1) containing the extramembraneous catalytic core and F(0) containing the membrane proton channel, linked together by a central stalk and a peripheral stalk. During catalysis, ATP synthesis in the catalytic domain of F(1) is coupled via a rotary mechanism of the central stalk subunits to proton translocation. Key component of the F(0) channel; it plays a direct role in translocation across the membrane. A homomeric c-ring of between 10-14 subunits forms the central stalk rotor element with the F(1) delta and epsilon subunits. This chain is ATP synthase subunit c, found in Campylobacter jejuni subsp. doylei (strain ATCC BAA-1458 / RM4099 / 269.97).